The chain runs to 207 residues: Guanylate kinase (207 aa).

Residues 6–185 (GLLIVLSGPS…AKNRIQCIVE (180 aa)) enclose the Guanylate kinase-like domain. An ATP-binding site is contributed by 13–20 (GPSGVGKG).

It belongs to the guanylate kinase family.

It localises to the cytoplasm. The catalysed reaction is GMP + ATP = GDP + ADP. Its function is as follows. Essential for recycling GMP and indirectly, cGMP. The polypeptide is Guanylate kinase (Staphylococcus aureus (strain Mu50 / ATCC 700699)).